The chain runs to 330 residues: Phosphate acyltransferase (330 aa).

It belongs to the PlsX family. In terms of assembly, homodimer. Probably interacts with PlsY.

It is found in the cytoplasm. It carries out the reaction a fatty acyl-[ACP] + phosphate = an acyl phosphate + holo-[ACP]. The protein operates within lipid metabolism; phospholipid metabolism. Its function is as follows. Catalyzes the reversible formation of acyl-phosphate (acyl-PO(4)) from acyl-[acyl-carrier-protein] (acyl-ACP). This enzyme utilizes acyl-ACP as fatty acyl donor, but not acyl-CoA. The sequence is that of Phosphate acyltransferase from Lactobacillus delbrueckii subsp. bulgaricus (strain ATCC BAA-365 / Lb-18).